The primary structure comprises 716 residues: Segment polarity protein dishevelled homolog DVL-3 (716 aa).

Residues 1–82 enclose the DIX domain; that stretch reads MGETKIIYHL…RVVSWLVSAE (82 aa). Arg27 bears the Omega-N-methylarginine mark. Ser48 and Ser125 each carry phosphoserine. The tract at residues 85–235 is disordered; that stretch reads HPDPAPFCAD…VSRIERSSSF (151 aa). A compositionally biased stretch (basic and acidic residues) spans 142-156; that stretch reads QRERPRRRDGPEHAT. Positions 175–190 are enriched in low complexity; the sequence is SSSTLMSSELETTSFF. Residue Ser192 is modified to Phosphoserine. Residues 199 to 212 show a composition bias toward low complexity; it reads SRFSSSTEQSSASR. Omega-N-methylarginine is present on Arg212. Positions 213 to 226 are enriched in basic residues; the sequence is LMRRHKRRRRKQKV. The PDZ domain occupies 249–321; sequence TVTLNMEKYN…NDDAVRVLRE (73 aa). Arg271 carries the asymmetric dimethylarginine; by PRMT1; alternate modification. Residues Arg271 and Arg342 each carry the symmetric dimethylarginine; by PRMT7; alternate modification. Arg342 carries the omega-N-methylarginine; alternate modification. Residue Thr346 is modified to Phosphothreonine. One can recognise a DEP domain in the interval 422 to 496; that stretch reads PESGLEVRDR…SEQCYYIFGD (75 aa). The tract at residues 546 to 691 is disordered; the sequence is PYNPHPGFPE…PPGRDLASVP (146 aa). The segment covering 565–581 has biased composition (low complexity); the sequence is ASSQHSEGSRSSGSNRS. Basic and acidic residues-rich tracts occupy residues 582 to 595 and 604 to 622; these read GSDR…KAGD and ESDH…RAPS. Arg614 carries the symmetric dimethylarginine; by PRMT7 modification. The segment covering 653–682 has biased composition (pro residues); the sequence is YGPPGVPPLYGPPMLMMPPPPAAMGPPGAP. Ser697 carries the post-translational modification Phosphoserine. Residue Arg698 is modified to Omega-N-methylarginine; alternate. Arg698 is subject to Dimethylated arginine; alternate. A Phosphoserine modification is found at Ser700.

It belongs to the DSH family. In terms of assembly, interacts (via the PDZ domain) with the C-terminal regions of VANGL1 and VANGL2. Interacts (via the region containing both the PDZ and DEP domains) with LRRFIP2; the DIX domain may inhibit this interaction. Interacts with CYLD, CEP164 and DAB2. Interacts with DCDC2. Interacts with FOXK1 and FOXK2. Interacts with DAAM2. Ubiquitinated. Deubiquitinated by CYLD, which acts on 'Lys-63'-linked ubiquitin chains. In terms of processing, phosphorylated by CSNK1D. Post-translationally, arginine methylation may function as a switch in regulation of function in Wnt signaling.

It localises to the cytoplasm. In terms of biological role, involved in the signal transduction pathway mediated by multiple Wnt genes. This is Segment polarity protein dishevelled homolog DVL-3 (DVL3) from Homo sapiens (Human).